Here is a 590-residue protein sequence, read N- to C-terminus: MELENIVANTVLLKAREGGGGKRKGKSKKWKEILKFPHISQCEDLRRTIDRDYYSLCDKQPIGRLLFRQFCETRPGLECYIQFLDLVAEYEITPDENLGAKGKEIMTKYLTPKSPVFIAQVGQDLVSQTEKKLLQSPCKELFSACAQSVHDYLKGDPFHEYLDSMYFDRFLQWKWLERQPVTKNTFRQYRVLGKGGFGEVCACQVRATGKMYACKRLEKKRIKKRKGESMALNEKQILEKVNSQFVVNLAYAYETKDALCLVLTIMNGGDLKFHIYNMGNPGFEEERALFYAAEILCGLEDLHRENTVYRDLKPENILLDDYGHIRISDLGLAVKIPEGDLIRGRVGTVGYMAPEVLNNQRYGLSPDYWGLGCLIYEMIEGQSPFRGRKEKVKREEVDRRVLETEEVYSSKFSEEAKSICNMLLTKDSKQRLGCQEEGAAEVKRHPFFRNMNFKRLEAGMLDPPFVPDPRAVYCKDVLDIEQFSTVKGVNLDHTDDDFYSKFSTGSVPIPWQNEMIETECFKELNVFGPNGTLSPDLNRSQPPEPPKKGLFHRLFRRQHQSNSKSSPTPKTSCNHRINSNHINSNSTGSS.

The N-terminal stretch occupies residues 1–185 (MELENIVANT…LERQPVTKNT (185 aa)). Residues 20–39 (GGKRKGKSKKWKEILKFPHI) form an interaction with calmodulin region. One can recognise an RGS domain in the interval 53 to 171 (YYSLCDKQPI…LDSMYFDRFL (119 aa)). S136 carries the phosphoserine modification. Positions 186 to 448 (FRQYRVLGKG…AAEVKRHPFF (263 aa)) constitute a Protein kinase domain. Residues 192-200 (LGKGGFGEV) and K215 each bind ATP. D311 acts as the Proton acceptor in catalysis. The Nuclear localization signal signature appears at 388 to 395 (RKEKVKRE). Residues 449–514 (RNMNFKRLEA…GSVPIPWQNE (66 aa)) form the AGC-kinase C-terminal domain. The residue at position 484 (S484) is a Phosphoserine; by autocatalysis. A Phosphothreonine; by autocatalysis modification is found at T485. Residues 546-565 (PKKGLFHRLFRRQHQSNSKS) form a sufficient for membrane localization region. Residues 557-590 (RQHQSNSKSSPTPKTSCNHRINSNHINSNSTGSS) are disordered. The span at 561 to 590 (SNSKSSPTPKTSCNHRINSNHINSNSTGSS) shows a compositional bias: low complexity. Phosphoserine is present on S579.

The protein belongs to the protein kinase superfamily. AGC Ser/Thr protein kinase family. GPRK subfamily. As to quaternary structure, interacts with ST13 (via the C-terminus 303-319 AA). Interacts with TP53/p53. Interacts with HTR4 (via C-terminus 330-346 AA); this interaction is promoted by 5-HT (serotonin). Interacts with HDAC5. Interacts with GIT1. Post-translationally, autophosphorylated. Autophosphorylation may play a critical role in the regulation of GRK5 kinase activity.

The protein localises to the cytoplasm. It localises to the nucleus. It is found in the cell membrane. It carries out the reaction [G-protein-coupled receptor] + ATP = [G-protein-coupled receptor]-phosphate + ADP + H(+). Inhibited by calmodulin with an IC(50) of 50 nM. Calmodulin inhibits GRK5 association with receptor and phospholipid. Serine/threonine kinase that phosphorylates preferentially the activated forms of a variety of G-protein-coupled receptors (GPCRs). Such receptor phosphorylation initiates beta-arrestin-mediated receptor desensitization, internalization, and signaling events leading to their down-regulation. Phosphorylates a variety of GPCRs, including adrenergic receptors, muscarinic acetylcholine receptors (more specifically Gi-coupled M2/M4 subtypes), dopamine receptors and opioid receptors. In addition to GPCRs, also phosphorylates various substrates: Hsc70-interacting protein/ST13, TP53/p53, HDAC5, and arrestin-1/ARRB1. Phosphorylation of ARRB1 by GRK5 inhibits G-protein independent MAPK1/MAPK3 signaling downstream of 5HT4-receptors. Phosphorylation of HDAC5, a repressor of myocyte enhancer factor 2 (MEF2) leading to nuclear export of HDAC5 and allowing MEF2-mediated transcription. Phosphorylation of TP53/p53, a crucial tumor suppressor, inhibits TP53/p53-mediated apoptosis. Phosphorylation of ST13 regulates internalization of the chemokine receptor. Phosphorylates rhodopsin (RHO) (in vitro) and a non G-protein-coupled receptor, LRP6 during Wnt signaling (in vitro). This chain is G protein-coupled receptor kinase 5 (Grk5), found in Mus musculus (Mouse).